The chain runs to 642 residues: Uromodulin (642 aa).

The signal sequence occupies residues M1–I26. The EGF-like 1 domain occupies R32–E64. Intrachain disulfides connect C34-C43, C37-C52, C54-C65, C71-C85, C79-C94, C96-C108, C114-C128, C122-C137, C139-C150, C152-C163, C157-C172, C176-C269, C197-C284, C219-C257, C225-C289, C250-C258, C299-C308, C302-C317, C319-C348, C336-C426, and C367-C390. N-linked (GlcNAc...) asparagine glycosylation occurs at N40. The 43-residue stretch at D67 to I109 folds into the EGF-like 2; calcium-binding domain. N78 carries N-linked (GlcNAc...) asparagine glycosylation. Positions D110–E151 constitute an EGF-like 3; calcium-binding domain. Residue N134 is glycosylated (N-linked (GlcNAc...) asparagine). Residues C152–A173 are beta hairpin. The segment at D174–T293 is D10C. N-linked (GlcNAc...) asparagine glycans are attached at residues N234 and N246. N277 is a glycosylation site (N-linked (GlcNAc...) asparagine). In terms of domain architecture, EGF-like 4 spans S294–V325. N324 carries an N-linked (GlcNAc...) asparagine glycan. The tract at residues E335–L430 is ZP-N. The region spanning E335–S590 is the ZP domain. N-linked (GlcNAc...) asparagine glycosylation is found at N397 and N448. Residues D431–T454 are flexible ZP-N/ZP-C linker; important for secretion and polymerization into filaments. The tract at residues G455–Q465 is internal hydrophobic patch (IHP). The interval G455 to S590 is ZP-C. 3 disulfide bridges follow: C507–C567, C528–C583, and C572–C579. N-linked (GlcNAc...) asparagine glycosylation occurs at N514. Positions R587 to S590 are essential for cleavage by HPN. The tract at residues V599–R607 is external hydrophobic patch (EHP); regulates polymerization into filaments. The GPI-anchor amidated serine moiety is linked to residue S620. The propeptide at S621 to Q642 is removed in mature form.

As to quaternary structure, homodimer that then polymerizes into long filaments. The filaments can additionally assemble laterally to form a sheet. The filaments consist of a zigzag-shaped backbone with laterally protruding arms which interact with bacterial adhesin fimH. Two fimH molecules can bind to a single UMOD monomer. Post-translationally, N-glycosylated. In terms of processing, proteolytically cleaved at a conserved C-terminal proteolytic cleavage site to generate the secreted form found in urine. This cleavage is catalyzed by HPN. Detected in kidney and pancreas.

It is found in the apical cell membrane. The protein resides in the basolateral cell membrane. Its subcellular location is the cell projection. It localises to the cilium membrane. The protein localises to the secreted. In terms of biological role, functions in biogenesis and organization of the apical membrane of epithelial cells of the thick ascending limb of Henle's loop (TALH), where it promotes formation of complex filamentous gel-like structure that may play a role in the water barrier permeability. May serve as a receptor for binding and endocytosis of cytokines (IL-1, IL-2) and TNF. Facilitates neutrophil migration across renal epithelia. Functionally, in the urine, may contribute to colloid osmotic pressure, retards passage of positively charged electrolytes, and inhibits formation of liquid containing supersaturated salts and subsequent formation of salt crystals. Protects against urinary tract infections by binding to type 1 fimbriated E.coli. Binds to bacterial adhesin fimH which mediates the stable formation of bacterial aggregates, prevents the binding of E.coli to uroplakins UPK1A and UPK1B which act as urothelial receptors for type I fimbriae, and allows for pathogen clearance through micturation. Also promotes aggregation of other bacteria including K.pneumoniae, P.aeruginosa and S.mitis and so may also protect against other uropathogens. This chain is Uromodulin (UMOD), found in Canis lupus familiaris (Dog).